We begin with the raw amino-acid sequence, 149 residues long: Putative prefoldin subunit alpha (149 aa).

Belongs to the prefoldin subunit alpha family.

It localises to the cytoplasm. In terms of biological role, molecular chaperone capable of stabilizing a range of proteins. This chain is Putative prefoldin subunit alpha, found in Aquifex aeolicus (strain VF5).